Reading from the N-terminus, the 353-residue chain is MNGTEGPYFYIPMLNTTGIVRSPYEYPQYYLVNPAAYAALCAYMFLLILLGFPINFLTLYVTIEHKKLRTPLNYILLNLAVANLFMVFGGFTTTMYTSMHGYFVLGRLGCNLEGFFATLGGEIGLWSLVVLAVERWMVVCKPISNFRFTENHAIMGLGFTWFAASACAVPPLVGWSRYIPEGMQCSCGVDYYTRAEGFNNESFVVYMFVCHFLIPLIVVFFCYGRLLCAVKEAAAAQQESETTQRAEREVTRMVVIMVIAFLICWCPYAGVAWYIFSNQGSEFGPLFMTIPAFFAKSSSIYNPLIYIFMNKQFRHCMITTLCCGKNPFEEEEGSTTTSKTEASSASSSSVSPA.

Topologically, residues 1 to 36 (MNGTEGPYFYIPMLNTTGIVRSPYEYPQYYLVNPAA) are extracellular. N-linked (GlcNAc...) asparagine glycans are attached at residues asparagine 2 and asparagine 15. Residues 37-61 (YAALCAYMFLLILLGFPINFLTLYV) form a helical membrane-spanning segment. Residues 62–73 (TIEHKKLRTPLN) lie on the Cytoplasmic side of the membrane. A helical membrane pass occupies residues 74-96 (YILLNLAVANLFMVFGGFTTTMY). At 97 to 110 (TSMHGYFVLGRLGC) the chain is on the extracellular side. An intrachain disulfide couples cysteine 110 to cysteine 187. The helical transmembrane segment at 111-133 (NLEGFFATLGGEIGLWSLVVLAV) threads the bilayer. The short motif at 134–136 (ERW) is the 'Ionic lock' involved in activated form stabilization element. The Cytoplasmic portion of the chain corresponds to 134-152 (ERWMVVCKPISNFRFTENH). Residues 153–173 (AIMGLGFTWFAASACAVPPLV) traverse the membrane as a helical segment. Residues 174–202 (GWSRYIPEGMQCSCGVDYYTRAEGFNNES) lie on the Extracellular side of the membrane. Asparagine 200 carries N-linked (GlcNAc...) asparagine glycosylation. Residues 203–224 (FVVYMFVCHFLIPLIVVFFCYG) form a helical membrane-spanning segment. Residues 225 to 252 (RLLCAVKEAAAAQQESETTQRAEREVTR) are Cytoplasmic-facing. A helical transmembrane segment spans residues 253 to 274 (MVVIMVIAFLICWCPYAGVAWY). At 275 to 286 (IFSNQGSEFGPL) the chain is on the extracellular side. A helical transmembrane segment spans residues 287 to 308 (FMTIPAFFAKSSSIYNPLIYIF). Lysine 296 is modified (N6-(retinylidene)lysine). Residues 309–353 (MNKQFRHCMITTLCCGKNPFEEEEGSTTTSKTEASSASSSSVSPA) are Cytoplasmic-facing. Residues cysteine 322 and cysteine 323 are each lipidated (S-palmitoyl cysteine). The interval 329–353 (EEEEGSTTTSKTEASSASSSSVSPA) is disordered. Residues 334–353 (STTTSKTEASSASSSSVSPA) are compositionally biased toward low complexity.

Belongs to the G-protein coupled receptor 1 family. Opsin subfamily. In terms of processing, phosphorylated on some or all of the serine and threonine residues present in the C-terminal region. Contains one covalently linked retinal chromophore.

It localises to the membrane. The protein localises to the cell projection. The protein resides in the cilium. Its subcellular location is the photoreceptor outer segment. Functionally, photoreceptor required for image-forming vision at low light intensity. While most salt water fish species use retinal as chromophore, most freshwater fish use 3-dehydroretinal, or a mixture of retinal and 3-dehydroretinal. Light-induced isomerization of 11-cis to all-trans retinal triggers a conformational change that activates signaling via G-proteins. Subsequent receptor phosphorylation mediates displacement of the bound G-protein alpha subunit by arrestin and terminates signaling. The protein is Rhodopsin (rho) of Solea solea (Common sole).